The sequence spans 618 residues: Proline--tRNA ligase (618 aa).

The protein belongs to the class-II aminoacyl-tRNA synthetase family. ProS type 1 subfamily. Homodimer.

The protein resides in the cytoplasm. The catalysed reaction is tRNA(Pro) + L-proline + ATP = L-prolyl-tRNA(Pro) + AMP + diphosphate. Catalyzes the attachment of proline to tRNA(Pro) in a two-step reaction: proline is first activated by ATP to form Pro-AMP and then transferred to the acceptor end of tRNA(Pro). As ProRS can inadvertently accommodate and process non-cognate amino acids such as alanine and cysteine, to avoid such errors it has two additional distinct editing activities against alanine. One activity is designated as 'pretransfer' editing and involves the tRNA(Pro)-independent hydrolysis of activated Ala-AMP. The other activity is designated 'posttransfer' editing and involves deacylation of mischarged Ala-tRNA(Pro). The misacylated Cys-tRNA(Pro) is not edited by ProRS. This chain is Proline--tRNA ligase, found in Streptococcus pyogenes serotype M3 (strain ATCC BAA-595 / MGAS315).